The chain runs to 388 residues: Probable peptidoglycan glycosyltransferase FtsW (388 aa).

11 helical membrane passes run 16-36 (LVLI…SSSV), 54-74 (VFAL…PSQS), 82-102 (WFLL…EIGG), 109-129 (LVVM…LFLA), 144-164 (TAVI…LLQP), 167-187 (GTTV…GAPF), 189-209 (YFVI…INSP), 233-253 (SQAL…GASV), 277-297 (WLGV…MFAV), 310-330 (ALVV…NVGV), and 342-362 (LPFV…IGLV).

Belongs to the SEDS family. FtsW subfamily.

It is found in the cell inner membrane. It carries out the reaction [GlcNAc-(1-&gt;4)-Mur2Ac(oyl-L-Ala-gamma-D-Glu-L-Lys-D-Ala-D-Ala)](n)-di-trans,octa-cis-undecaprenyl diphosphate + beta-D-GlcNAc-(1-&gt;4)-Mur2Ac(oyl-L-Ala-gamma-D-Glu-L-Lys-D-Ala-D-Ala)-di-trans,octa-cis-undecaprenyl diphosphate = [GlcNAc-(1-&gt;4)-Mur2Ac(oyl-L-Ala-gamma-D-Glu-L-Lys-D-Ala-D-Ala)](n+1)-di-trans,octa-cis-undecaprenyl diphosphate + di-trans,octa-cis-undecaprenyl diphosphate + H(+). Its pathway is cell wall biogenesis; peptidoglycan biosynthesis. Functionally, peptidoglycan polymerase that is essential for cell division. In Thiomicrospira cyclica (strain DSM 14477 / JCM 11371 / ALM1) (Thioalkalimicrobium cyclicum), this protein is Probable peptidoglycan glycosyltransferase FtsW.